The following is a 985-amino-acid chain: DNA polymerase (985 aa).

A disordered region spans residues 936–972; it reads APSASDASGKRARKGAAPSDDESGSSEDEDAPCEPKC. Residues 954–967 are compositionally biased toward acidic residues; it reads SDDESGSSEDEDAP.

It belongs to the DNA polymerase type-B family.

It carries out the reaction DNA(n) + a 2'-deoxyribonucleoside 5'-triphosphate = DNA(n+1) + diphosphate. Functionally, replicates the viral genome, host DNA polymerases cannot substitute for the viral enzyme in this process. The polypeptide is DNA polymerase (POL) (Orgyia pseudotsugata (Douglas-fir tussock moth)).